Consider the following 139-residue polypeptide: D-ribose pyranase (139 aa).

His-20 (proton donor) is an active-site residue. Substrate contacts are provided by residues Asp-28, His-106, and 128-130 (YAN).

Belongs to the RbsD / FucU family. RbsD subfamily. As to quaternary structure, homodecamer.

It is found in the cytoplasm. It carries out the reaction beta-D-ribopyranose = beta-D-ribofuranose. The protein operates within carbohydrate metabolism; D-ribose degradation; D-ribose 5-phosphate from beta-D-ribopyranose: step 1/2. Functionally, catalyzes the interconversion of beta-pyran and beta-furan forms of D-ribose. This Haemophilus influenzae (strain 86-028NP) protein is D-ribose pyranase.